The sequence spans 144 residues: Probable transcription termination protein NusA (144 aa).

In terms of domain architecture, KH spans 101 to 144 (RTDIVVGVKPEEIGKVIGKEGKNIKLFKDAVSRYFNVNSISVKQ).

It belongs to the NusA family.

The protein localises to the cytoplasm. Functionally, participates in transcription termination. The polypeptide is Probable transcription termination protein NusA (Thermoplasma acidophilum (strain ATCC 25905 / DSM 1728 / JCM 9062 / NBRC 15155 / AMRC-C165)).